Reading from the N-terminus, the 309-residue chain is Methionyl-tRNA formyltransferase (309 aa).

Residue 112 to 115 coordinates (6S)-5,6,7,8-tetrahydrofolate; the sequence is SLLP.

Belongs to the Fmt family.

It catalyses the reaction L-methionyl-tRNA(fMet) + (6R)-10-formyltetrahydrofolate = N-formyl-L-methionyl-tRNA(fMet) + (6S)-5,6,7,8-tetrahydrofolate + H(+). Functionally, attaches a formyl group to the free amino group of methionyl-tRNA(fMet). The formyl group appears to play a dual role in the initiator identity of N-formylmethionyl-tRNA by promoting its recognition by IF2 and preventing the misappropriation of this tRNA by the elongation apparatus. In Bartonella tribocorum (strain CIP 105476 / IBS 506), this protein is Methionyl-tRNA formyltransferase.